The following is a 509-amino-acid chain: Putative ATP-dependent RNA helicase QP509L (509 aa).

The Helicase ATP-binding domain maps to K110–P262. L123–T130 lines the ATP pocket. The DEAH box signature appears at D215–H218.

It belongs to the DEAD box helicase family. DEAH subfamily.

It catalyses the reaction ATP + H2O = ADP + phosphate + H(+). This chain is Putative ATP-dependent RNA helicase QP509L, found in African swine fever virus (isolate Tick/Malawi/Lil 20-1/1983) (ASFV).